A 675-amino-acid chain; its full sequence is Protein kintoun (675 aa).

Disordered stretches follow at residues 98–131 (ASKK…KQGA), 265–293 (AGEG…TAPP), 310–340 (EGGA…AVAK), and 509–659 (EAAH…AAPT). The segment covering 102-113 (QQQEQEKQEKEQ) has biased composition (basic and acidic residues). A compositionally biased stretch (low complexity) spans 279 to 293 (VPGVPDLPGAKTAPP). Residues 529–543 (AAAASSGAAPAPAAA) show a composition bias toward low complexity. The span at 544–553 (SEEEEEEDKE) shows a compositional bias: acidic residues. Low complexity predominate over residues 564–577 (DPAAAAAAAGASSG). The span at 579–596 (ELTENERKWRELHARQQQ) shows a compositional bias: basic and acidic residues. Composition is skewed to low complexity over residues 604–617 (AAEA…AAAE) and 628–659 (VAQG…AAPT).

Belongs to the PIH1 family. Kintoun subfamily.

It is found in the cytoplasm. Functionally, required for cytoplasmic pre-assembly of axonemal dyneins, thereby playing a central role in motility in cilia and flagella. Involved in pre-assembly of dynein arm complexes in the cytoplasm before intraflagellar transport loads them for the ciliary compartment. The chain is Protein kintoun (pf13) from Chlamydomonas reinhardtii (Chlamydomonas smithii).